Reading from the N-terminus, the 341-residue chain is Phosphoribosylformylglycinamidine cyclo-ligase (341 aa).

It belongs to the AIR synthase family.

The protein localises to the cytoplasm. The catalysed reaction is 2-formamido-N(1)-(5-O-phospho-beta-D-ribosyl)acetamidine + ATP = 5-amino-1-(5-phospho-beta-D-ribosyl)imidazole + ADP + phosphate + H(+). It functions in the pathway purine metabolism; IMP biosynthesis via de novo pathway; 5-amino-1-(5-phospho-D-ribosyl)imidazole from N(2)-formyl-N(1)-(5-phospho-D-ribosyl)glycinamide: step 2/2. The chain is Phosphoribosylformylglycinamidine cyclo-ligase from Synechococcus elongatus (strain ATCC 33912 / PCC 7942 / FACHB-805) (Anacystis nidulans R2).